Reading from the N-terminus, the 394-residue chain is Venom metalloproteinase antarease TserMP_A (394 aa).

Positions 1–16 are cleaved as a signal peptide; the sequence is MISYLASIFLLATVSA. Positions 17 to 157 are excised as a propeptide; that stretch reads VPSGRVEVVF…NAENVSRMAR (141 aa). One can recognise a Peptidase M12B domain in the interval 162–391; that stretch reads IVVEYYIVTD…PTASCIFQQC (230 aa). C295 and C386 are joined by a disulfide. H319 contributes to the Zn(2+) binding site. Residue E320 is part of the active site. Residues H323 and H329 each contribute to the Zn(2+) site.

Zn(2+) is required as a cofactor. Post-translationally, contains 4 disulfide bonds. As to expression, expressed by the venom gland.

The protein resides in the secreted. Inhibited by EDTA. In terms of biological role, acts as a metalloprotease. Penetrates intact tissue and specifically cleaves the vesicle-associated membrane protein 2 (VAMP2) (part of the SNARE complex) involved in pancreatic secretion, thus disrupting the normal vesicular traffic. The sequence is that of Venom metalloproteinase antarease TserMP_A from Tityus serrulatus (Brazilian scorpion).